The chain runs to 61 residues: Large ribosomal subunit protein uL30 (61 aa).

Belongs to the universal ribosomal protein uL30 family. Part of the 50S ribosomal subunit.

The chain is Large ribosomal subunit protein uL30 from Francisella philomiragia subsp. philomiragia (strain ATCC 25017 / CCUG 19701 / FSC 153 / O#319-036).